The following is a 504-amino-acid chain: Glutamate--tRNA ligase (504 aa).

A 'HIGH' region motif is present at residues 14–24 (PSPTGYLHVGG). Positions 261-265 (KLSKR) match the 'KMSKS' region motif. Residue K264 coordinates ATP.

This sequence belongs to the class-I aminoacyl-tRNA synthetase family. Glutamate--tRNA ligase type 1 subfamily. Monomer.

It is found in the cytoplasm. The catalysed reaction is tRNA(Glu) + L-glutamate + ATP = L-glutamyl-tRNA(Glu) + AMP + diphosphate. Catalyzes the attachment of glutamate to tRNA(Glu) in a two-step reaction: glutamate is first activated by ATP to form Glu-AMP and then transferred to the acceptor end of tRNA(Glu). This chain is Glutamate--tRNA ligase, found in Chlorobium luteolum (strain DSM 273 / BCRC 81028 / 2530) (Pelodictyon luteolum).